Reading from the N-terminus, the 319-residue chain is Coproporphyrin III ferrochelatase (319 aa).

Fe(2+) contacts are provided by His193 and Glu274.

It belongs to the ferrochelatase family.

It is found in the cytoplasm. It catalyses the reaction Fe-coproporphyrin III + 2 H(+) = coproporphyrin III + Fe(2+). The protein operates within porphyrin-containing compound metabolism; protoheme biosynthesis. In terms of biological role, involved in coproporphyrin-dependent heme b biosynthesis. Catalyzes the insertion of ferrous iron into coproporphyrin III to form Fe-coproporphyrin III. The sequence is that of Coproporphyrin III ferrochelatase from Streptococcus mutans serotype c (strain ATCC 700610 / UA159).